The following is a 27-amino-acid chain: Conotoxin as14a (27 aa).

2 disulfide bridges follow: Cys-6/Cys-26 and Cys-10/Cys-22.

This sequence belongs to the conotoxin L superfamily. In terms of tissue distribution, expressed by the venom duct.

Its subcellular location is the secreted. In terms of biological role, in vivo, intracranial injection, elicits scratching and grooming activity in mice. The polypeptide is Conotoxin as14a (Conus cancellatus (Cancellate cone)).